A 97-amino-acid polypeptide reads, in one-letter code: Plastocyanin A/B (97 aa).

The region spanning 1 to 97 (AEVKLGSDDG…AGMKGEVTVN (97 aa)) is the Plastocyanin-like domain. Positions 37, 82, 85, and 90 each coordinate Cu cation.

The protein belongs to the plastocyanin family. It depends on Cu(2+) as a cofactor.

The protein localises to the plastid. It is found in the chloroplast thylakoid membrane. In terms of biological role, participates in electron transfer between P700 and the cytochrome b6-f complex in photosystem I. The protein is Plastocyanin A/B (PETE) of Petroselinum crispum (Parsley).